The following is a 451-amino-acid chain: Glucose-6-phosphate isomerase (451 aa).

At Thr38 the chain carries Phosphothreonine. Glu290 functions as the Proton donor in the catalytic mechanism. Catalysis depends on residues His311 and Lys425.

It belongs to the GPI family.

It is found in the cytoplasm. It catalyses the reaction alpha-D-glucose 6-phosphate = beta-D-fructose 6-phosphate. The protein operates within carbohydrate biosynthesis; gluconeogenesis. It participates in carbohydrate degradation; glycolysis; D-glyceraldehyde 3-phosphate and glycerone phosphate from D-glucose: step 2/4. Functionally, catalyzes the reversible isomerization of glucose-6-phosphate to fructose-6-phosphate. This chain is Glucose-6-phosphate isomerase, found in Shouchella clausii (strain KSM-K16) (Alkalihalobacillus clausii).